We begin with the raw amino-acid sequence, 112 residues long: Secretoglobin family 2B member 24 (112 aa).

The N-terminal stretch at 1–23 (MKGTLLLLALLMIGELGFHTTEA) is a signal peptide.

The protein belongs to the secretoglobin family. In terms of tissue distribution, expressed in lacrimal gland, at higher level in males than females.

The protein resides in the secreted. The sequence is that of Secretoglobin family 2B member 24 (Scgb2b24) from Mus musculus (Mouse).